Consider the following 89-residue polypeptide: Small ribosomal subunit protein bS16 (89 aa).

This sequence belongs to the bacterial ribosomal protein bS16 family.

In Psychrobacter arcticus (strain DSM 17307 / VKM B-2377 / 273-4), this protein is Small ribosomal subunit protein bS16.